Consider the following 1254-residue polypeptide: Structural polyprotein (1254 aa).

Residues 43 to 77 (LQAQQMQQLISAVSALTTKQNVKAPKGQRKQKQQK) form a host transcription inhibition region. Positions 60 to 112 (TKQNVKAPKGQRKQKQQKPKEKKEKQKKKPTXKKKQQQKPKPQAKKKKPGRRE) are disordered. A Nuclear localization signal motif is present at residues 70–108 (QRKQKQQKPKEKKEKQKKKPTXKKKQQQKPKPQAKKKKP). The segment covering 84-110 (KQKKKPTXKKKQQQKPKPQAKKKKPGR) has biased composition (basic residues). A binding to the viral RNA region spans residues 95–123 (QQQKPKPQAKKKKPGRRERMCMKIENDCI). Positions 108–122 (PGRRERMCMKIENDC) are ribosome-binding. Residues C122 and C137 are joined by a disulfide bond. The Peptidase S3 domain occupies 122-270 (CIFEVKLDGK…RVTPEGTEEW (149 aa)). H148 acts as the Charge relay system in catalysis. The Nuclear export signal motif lies at 153–163 (IDNPDLAKLTY). The segment at 164–169 (KKSSKY) is interaction with spike glycoprotein E2. The Charge relay system role is filled by D170. Residues 192–202 (PEGHYNWHHGA) form a dimerization of the capsid protein region. S222 serves as the catalytic Charge relay system. Positions 228–232 (DNKGR) are dimerization of the capsid protein. Topologically, residues 270-694 (WSAALMMCIL…PHEIIQYYYG (425 aa)) are extracellular. Positions 271–282 (SAALMMCILANT) are functions as an uncleaved signal peptide for the precursor of protein E3/E2. Disulfide bonds link C277-C286, C291-C295, and C294-C326. N281 carries an N-linked (GlcNAc...) asparagine; by host glycan. An N-linked (GlcNAc...) asparagine; by host glycan is attached at N328. 6 cysteine pairs are disulfide-bonded: C353/C459, C356/C362, C425/C439, C487/C599, C535/C559, and C537/C554. 2 interaction with host Mxra8 receptor regions span residues 360 to 363 (YFCY) and 396 to 398 (HAH). The segment at 518-521 (TAGN) is interaction with host Mxra8 receptor. Residue N534 is glycosylated (N-linked (GlcNAc...) asparagine; by host). Residues 550–556 (TINTCKI) are interaction with host Mxra8 receptor. A glycan (N-linked (GlcNAc...) asparagine; by host) is linked at N596. A helical membrane pass occupies residues 695–715 (LYPAATIAAVSGASLMALLTL). At 716-756 (AATCCMLATARRKCLTPYALTPGAVVPLTLGLLXCAPRANA) the chain is on the cytoplasmic side. Residue C719 is the site of S-palmitoyl cysteine; by host attachment. Positions 724 to 728 (TARRK) are interaction with the capsid protein. Residues C729 and C750 are each lipidated (S-palmitoyl cysteine; by host). Residues 729 to 749 (CLTPYALTPGAVVPLTLGLLX) form a transient transmembrane before p62-6K protein processing region. An intrachain disulfide couples C729 to C750. Residues 757–771 (ASFAETMAYLWDENK) are Extracellular-facing. The chain crosses the membrane as a helical span at residues 772-792 (TLFWMEXXXXXXALALLACCI). A topological domain (cytoplasmic) is located at residue K793. A helical transmembrane segment spans residues 794 to 814 (SLICCCKPFSFLVLLSLGASA). Topologically, residues 815-1231 (KAYEHTATIP…AMTWVQRMAS (417 aa)) are extracellular. Cystine bridges form between C865–C930, C878–C910, C879–C912, and C884–C894. Residues 900-917 (VYPFMWGGAYCFCDSENT) are E1 fusion peptide loop. The N-linked (GlcNAc...) asparagine; by host glycan is linked to N957. 4 disulfide bridges follow: C1075–C1087, C1117–C1192, C1122–C1196, and C1144–C1186. A helical membrane pass occupies residues 1232-1252 (GLGGLALIAVVVLVLVTCITM). C1249 carries the S-palmitoyl cysteine; by host lipid modification. C1249 is lipidated: S-stearoyl cysteine; by host. The Cytoplasmic segment spans residues 1253 to 1254 (RR).

As to quaternary structure, homodimer. Homomultimer. Interacts with host karyopherin KPNA4; this interaction allows the nuclear import of the viral capsid protein. Interacts with spike glycoprotein E2. Interacts with host IRAK1; the interaction leads to inhibition of IRAK1-dependent signaling. The precursor of protein E3/E2 and E1 form a heterodimer shortly after synthesis. In terms of assembly, the precursor of protein E3/E2 and E1 form a heterodimer shortly after synthesis. Processing of the precursor of protein E3/E2 into E2 and E3 results in a heterodimer of the spike glycoproteins E2 and E1. Spike at virion surface are constituted of a trimer of E2-E1 heterodimers. After target cell attachment and endocytosis, E1 change conformation to form homotrimers. Interacts with 6K protein. As to quaternary structure, interacts with spike glycoprotein E1. Processing of the precursor of protein E3/E2 into E2 and E3 results in a heterodimer of the spike glycoproteins E2 and E1. Spike at virion surface are constituted of a trimer of E2-E1 heterodimers. Interacts with 6K protein. Interacts with host MXRA8; this interaction mediates virus entry. Post-translationally, structural polyprotein: Specific enzymatic cleavages in vivo yield mature proteins. Capsid protein is auto-cleaved during polyprotein translation, unmasking a signal peptide at the N-terminus of the precursor of E3/E2. The remaining polyprotein is then targeted to the host endoplasmic reticulum, where host signal peptidase cleaves it into pE2, 6K and E1 proteins. pE2 is further processed to mature E3 and E2 by host furin in trans-Golgi vesicle. In terms of processing, palmitoylated via thioester bonds. These palmitoylations may induce disruption of the C-terminus transmembrane. This would result in the reorientation of E2 C-terminus from lumenal to cytoplasmic side. N-glycosylated. Post-translationally, palmitoylated via thioester bonds.

The protein resides in the virion. Its subcellular location is the host cytoplasm. It is found in the host cell membrane. The protein localises to the host nucleus. It localises to the virion membrane. The protein resides in the host Golgi apparatus. Its subcellular location is the host trans-Golgi network. It is found in the host endoplasmic reticulum. The enzyme catalyses Autocatalytic release of the core protein from the N-terminus of the togavirus structural polyprotein by hydrolysis of a -Trp-|-Ser- bond.. Forms an icosahedral capsid with a T=4 symmetry composed of 240 copies of the capsid protein surrounded by a lipid membrane through which penetrate 80 spikes composed of trimers of E1-E2 heterodimers. The capsid protein binds to the viral RNA genome at a site adjacent to a ribosome binding site for viral genome translation following genome release. Possesses a protease activity that results in its autocatalytic cleavage from the nascent structural protein. Following its self-cleavage, the capsid protein transiently associates with ribosomes, and within several minutes the protein binds to viral RNA and rapidly assembles into icosahedric core particles. The resulting nucleocapsid eventually associates with the cytoplasmic domain of the spike glycoprotein E2 at the cell membrane, leading to budding and formation of mature virions. In case of infection, new virions attach to target cells and after clathrin-mediated endocytosis their membrane fuses with the host endosomal membrane. This leads to the release of the nucleocapsid into the cytoplasm, followed by an uncoating event necessary for the genomic RNA to become accessible. The uncoating might be triggered by the interaction of capsid proteins with ribosomes. Binding of ribosomes would release the genomic RNA since the same region is genomic RNA-binding and ribosome-binding. Specifically inhibits interleukin-1 receptor-associated kinase 1/IRAK1-dependent signaling during viral entry, representing a means by which the alphaviruses may evade innate immune detection and activation prior to viral gene expression. Functionally, provides the signal sequence for the translocation of the precursor of protein E3/E2 to the host endoplasmic reticulum. Furin-cleaved E3 remains associated with spike glycoprotein E1 and mediates pH protection of the latter during the transport via the secretory pathway. After virion release from the host cell, the assembly protein E3 is gradually released in the extracellular space. Its function is as follows. Plays a role in viral attachment to target host cell, by binding to the cell receptor MXRA8. The host LDLR may also act as a cell receptor for viral entry. Synthesized as a p62 precursor which is processed by furin at the cell membrane just before virion budding, giving rise to E2-E1 heterodimer. The p62-E1 heterodimer is stable, whereas E2-E1 is unstable and dissociate at low pH. p62 is processed at the last step, presumably to avoid E1 fusion activation before its final export to cell surface. E2 C-terminus contains a transitory transmembrane that would be disrupted by palmitoylation, resulting in reorientation of the C-terminal tail from lumenal to cytoplasmic side. This step is critical since E2 C-terminus is involved in budding by interacting with capsid proteins. This release of E2 C-terminus in cytoplasm occurs lately in protein export, and precludes premature assembly of particles at the endoplasmic reticulum membrane. In terms of biological role, acts as a viroporin that participates in virus glycoprotein processing and transport to the plasma membrane, cell permeabilization and budding of viral particles. The cation channel is permeable to Na(+)&gt;K(+)&gt;Ca(2+) in vitro. Disrupts the calcium homeostasis of the cell, probably at the endoplasmic reticulum level. This leads to cytoplasmic calcium elevation. Because of its lipophilic properties, the 6K protein is postulated to influence the selection of lipids that interact with the transmembrane domains of the glycoproteins, which, in turn, affects the deformability of the bilayer required for the extreme curvature that occurs as budding proceeds. Present in low amount in virions, about 3% compared to viral glycoproteins. Class II viral fusion protein. Fusion activity is inactive as long as E1 is bound to E2 in mature virion. After virus attachment to target cell via host MXRA8 and endocytosis, acidification of the endosome induce dissociation of E1/E2 heterodimer and concomitant trimerization of the E1 subunits. This E1 trimer is fusion active, and promotes release of viral nucleocapsid in cytoplasm after endosome and viral membrane fusion. Efficient fusion requires the presence of cholesterol and sphingolipid in the target membrane. This is Structural polyprotein from Ross river virus (strain NB5092) (RRV).